A 314-amino-acid chain; its full sequence is Olfactory receptor 2W3 (314 aa).

Topologically, residues 1-25 are extracellular; it reads MDGTNGSTQTHFILLGFSDRPHLER. The N-linked (GlcNAc...) asparagine glycan is linked to Asn-5. The helical transmembrane segment at 26-49 threads the bilayer; it reads ILFVVILIAYLLTLVGNTTIILVS. The Cytoplasmic segment spans residues 50 to 57; it reads RLDPHLHT. A helical membrane pass occupies residues 58-79; it reads PMYFFLAHLSFLDLSFTTSSIP. Residues 80 to 100 are Extracellular-facing; it reads QLLYNLNGCDKTISYMGCAIQ. A helical membrane pass occupies residues 101–120; the sequence is LFLFLGLGGVECLLLAVMAY. The Cytoplasmic portion of the chain corresponds to 121–139; that stretch reads DRCVAICKPLHYMVIMNPR. The helical transmembrane segment at 140-158 threads the bilayer; it reads LCRGLVSVTWGCGVANSLA. Residues 159–195 lie on the Extracellular side of the membrane; sequence MSPVTLRLPRCGHHEVDHFLREMPALIRMACVSTVAI. A helical transmembrane segment spans residues 196–219; the sequence is EGTVFVLAVGVVLSPLVFILLSYS. Over 220 to 236 the chain is Cytoplasmic; that stretch reads YIVRAVLQIRSASGRQK. Residues 237–259 form a helical membrane-spanning segment; the sequence is AFGTCGSHLTVVSLFYGNIIYMY. The Extracellular segment spans residues 260–272; it reads MQPGASSSQDQGM. Residues 273–292 traverse the membrane as a helical segment; the sequence is FLMLFYNIVTPLLNPLIYTL. Residues 293–314 are Cytoplasmic-facing; it reads RNREVKGALGRLLLGKRELGKE.

The protein belongs to the G-protein coupled receptor 1 family.

The protein localises to the cell membrane. Functionally, odorant receptor. The polypeptide is Olfactory receptor 2W3 (OR2W3) (Homo sapiens (Human)).